Reading from the N-terminus, the 249-residue chain is Sodium channel modifier 1 (249 aa).

A Bipartite nuclear localization signal motif is present at residues 4–20; sequence KREGDDQSQLNILKKRR. The Matrin-type zinc finger occupies 42 to 74; it reads YSCLVCSHRPVFDTVDMLVVHRKGKRHLEGMKW. Basic and acidic residues predominate over residues 94–103; it reads YVKAEDDRQE. Disordered regions lie at residues 94–116, 128–199, and 228–249; these read YVKA…QTRK, YSSC…PLTE, and ENVE…SESS. The span at 104–115 shows a compositional bias: polar residues; sequence PSSSAPLLTQTR. A compositionally biased stretch (basic and acidic residues) spans 134 to 149; that stretch reads KASERSESSSKEHRND. Residues 150–170 are compositionally biased toward polar residues; sequence LANSHLSMRTESNDSRTTVHQ. Acidic residues predominate over residues 230-239; that stretch reads VEFDSDEEEP.

As to quaternary structure, component of the minor spliceosome, which splices U12-type introns.

The protein localises to the nucleus. It is found in the nucleoplasm. The protein resides in the nucleus speckle. In terms of biological role, as a component of the minor spliceosome, involved in the splicing of U12-type introns in pre-mRNAs. The protein is Sodium channel modifier 1 (scnm1) of Danio rerio (Zebrafish).